A 579-amino-acid chain; its full sequence is MFS-type transporter sphD (579 aa).

Residues 17–62 form a disordered region; sequence SAFAVRAEPDSEPVSEKQGTAETDAETGAGGTEVPAERNGEDDVER. Over residues 51–62 the composition is skewed to basic and acidic residues; that stretch reads PAERNGEDDVER. A run of 8 helical transmembrane segments spans residues 73–93, 110–130, 138–158, 168–188, 200–220, 227–247, 267–287, and 294–314; these read AFIG…ALGI, FWAN…WASI, PPLY…AVAQ, VLQG…LADM, LMAI…ALFA, WIGW…FFFL, WIGM…LSWA, and GAWQ…IFAF. Residue N335 is glycosylated (N-linked (GlcNAc...) asparagine). A run of 6 helical transmembrane segments spans residues 338–358, 367–391, 398–419, 429–449, 460–480, and 541–561; these read LVGG…LPLI, AILS…SMML, YVWI…LALF, LGLP…LLPM, GLAI…GLTI, and FQTI…TSLF.

The protein belongs to the major facilitator superfamily.

It localises to the membrane. Its function is as follows. MFS-type transporter; part of the gene cluster that mediates the biosynthesis of sphingofungins, bioactive molecules acting as sphingolipid inhibitors via inhibiting serine palmitoyl transferase (SPT). This is MFS-type transporter sphD from Aspergillus fumigatus (strain CBS 144.89 / FGSC A1163 / CEA10) (Neosartorya fumigata).